The primary structure comprises 192 residues: MKALFLVIFAYLLGSITFGEVIAKLKGVDLRNVGSGNVGATNVTRALGKKYGVLVFFLDFLKGFIPALIAVKSFGIDSWVLTFTGLASVLGHMYPVFFGFKGGKGVATALGVVFAVSPSVALFSFLVWLGIFLWKRYVSLASITATISAFLFLFVAGYPVNVLFMAIVIGALIIYRHRENINRLLTGREHRF.

Transmembrane regions (helical) follow at residues 3–23 (ALFL…EVIA), 51–71 (YGVL…LIAV), 80–100 (VLTF…FFGF), 112–132 (VVFA…LGIF), and 149–169 (AFLF…AIVI).

This sequence belongs to the PlsY family. As to quaternary structure, probably interacts with PlsX.

The protein resides in the cell inner membrane. It carries out the reaction an acyl phosphate + sn-glycerol 3-phosphate = a 1-acyl-sn-glycero-3-phosphate + phosphate. The protein operates within lipid metabolism; phospholipid metabolism. Functionally, catalyzes the transfer of an acyl group from acyl-phosphate (acyl-PO(4)) to glycerol-3-phosphate (G3P) to form lysophosphatidic acid (LPA). This enzyme utilizes acyl-phosphate as fatty acyl donor, but not acyl-CoA or acyl-ACP. The polypeptide is Glycerol-3-phosphate acyltransferase (Aquifex aeolicus (strain VF5)).